We begin with the raw amino-acid sequence, 379 residues long: Anhydro-N-acetylmuramic acid kinase (379 aa).

An ATP-binding site is contributed by 9-16 (GTSVDGID).

It belongs to the anhydro-N-acetylmuramic acid kinase family.

The enzyme catalyses 1,6-anhydro-N-acetyl-beta-muramate + ATP + H2O = N-acetyl-D-muramate 6-phosphate + ADP + H(+). Its pathway is amino-sugar metabolism; 1,6-anhydro-N-acetylmuramate degradation. It functions in the pathway cell wall biogenesis; peptidoglycan recycling. Its function is as follows. Catalyzes the specific phosphorylation of 1,6-anhydro-N-acetylmuramic acid (anhMurNAc) with the simultaneous cleavage of the 1,6-anhydro ring, generating MurNAc-6-P. Is required for the utilization of anhMurNAc either imported from the medium or derived from its own cell wall murein, and thus plays a role in cell wall recycling. The sequence is that of Anhydro-N-acetylmuramic acid kinase from Acaryochloris marina (strain MBIC 11017).